The following is a 72-amino-acid chain: MSSTQDEAILRNARETIDSLYDLSQLLQTGLDKSTLSICVGMIEQGANPDTLAAVIKELRSENEALNSQSNA.

The protein belongs to the MOZART1 family. As to quaternary structure, part of the gamma-tubulin complex.

The protein resides in the cytoplasm. It localises to the cytoskeleton. Its subcellular location is the microtubule organizing center. The protein localises to the spindle pole body. In terms of biological role, required for gamma-tubulin complex recruitment to the microtubule organizing center (MTOC). The polypeptide is Mitotic-spindle organizing protein 1 (Cryptococcus neoformans var. neoformans serotype D (strain B-3501A) (Filobasidiella neoformans)).